Reading from the N-terminus, the 123-residue chain is Ribosome-binding factor A (123 aa).

Belongs to the RbfA family. In terms of assembly, monomer. Binds 30S ribosomal subunits, but not 50S ribosomal subunits or 70S ribosomes.

It localises to the cytoplasm. In terms of biological role, one of several proteins that assist in the late maturation steps of the functional core of the 30S ribosomal subunit. Associates with free 30S ribosomal subunits (but not with 30S subunits that are part of 70S ribosomes or polysomes). Required for efficient processing of 16S rRNA. May interact with the 5'-terminal helix region of 16S rRNA. The protein is Ribosome-binding factor A of Cupriavidus metallidurans (strain ATCC 43123 / DSM 2839 / NBRC 102507 / CH34) (Ralstonia metallidurans).